The following is a 512-amino-acid chain: Probable DNA ligase (512 aa).

Glu208 serves as a coordination point for ATP. Lys210 (N6-AMP-lysine intermediate) is an active-site residue. The ATP site is built by Arg215, Arg230, Glu259, Phe299, Arg374, and Lys380.

It belongs to the ATP-dependent DNA ligase family. Mg(2+) serves as cofactor.

It carries out the reaction ATP + (deoxyribonucleotide)n-3'-hydroxyl + 5'-phospho-(deoxyribonucleotide)m = (deoxyribonucleotide)n+m + AMP + diphosphate.. In terms of biological role, DNA ligase that seals nicks in double-stranded DNA during DNA replication, DNA recombination and DNA repair. The chain is Probable DNA ligase from Streptomyces coelicolor (strain ATCC BAA-471 / A3(2) / M145).